The sequence spans 301 residues: MAEEPKPISPLKNLLAGGFGGVCLVFVGHPLDTVKVRLQTQPPSLPGQPPMYSGTIDCFRKTLFREGITGLYRGMAAPIIGVTPMFAVCFFGFGLGKRLQQKSPEDELTYPQLFTAGMLSGVFTTGIMTPGERIKCLLQIQASSGKNKYSGTLDCAKKLYQEFGIRGFYKGTALTLMRDVPASGMYFMTYEWLKNLFTPQGKSVHDLSVPRVLVAGGFRGIFNWVVAIPPDVLKSRFQTAPPGKYPNGFRDVLRELIREEGVTSLYKGFNAVMIRAFPANAACFLGFEIPMKILNWIAPNL.

Ala-2 is subject to N-acetylalanine. The Cytoplasmic segment spans residues 2 to 12 (AEEPKPISPLK). 3 Solcar repeats span residues 8–99 (ISPL…GKRL), 108–196 (LTYP…LKNL), and 207–293 (LSVP…PMKI). The chain crosses the membrane as a helical span at residues 13–31 (NLLAGGFGGVCLVFVGHPL). Topologically, residues 32–73 (DTVKVRLQTQPPSLPGQPPMYSGTIDCFRKTLFREGITGLYR) are mitochondrial matrix. The chain crosses the membrane as a helical span at residues 74-93 (GMAAPIIGVTPMFAVCFFGF). Residues 94 to 112 (GLGKRLQQKSPEDELTYPQ) lie on the Cytoplasmic side of the membrane. The helical transmembrane segment at 113-131 (LFTAGMLSGVFTTGIMTPG) threads the bilayer. At 132 to 170 (ERIKCLLQIQASSGKNKYSGTLDCAKKLYQEFGIRGFYK) the chain is on the mitochondrial matrix side. N6-acetyllysine occurs at positions 148 and 157. Lys-170 bears the N6-acetyllysine; alternate mark. The residue at position 170 (Lys-170) is an N6-succinyllysine; alternate. Residues 171 to 190 (GTALTLMRDVPASGMYFMTY) form a helical membrane-spanning segment. The Cytoplasmic segment spans residues 191 to 211 (EWLKNLFTPQGKSVHDLSVPR). Residues 212–230 (VLVAGGFRGIFNWVVAIPP) form a helical membrane-spanning segment. Residues 231–267 (DVLKSRFQTAPPGKYPNGFRDVLRELIREEGVTSLYK) lie on the Mitochondrial matrix side of the membrane. A helical transmembrane segment spans residues 268 to 287 (GFNAVMIRAFPANAACFLGF). The Cytoplasmic portion of the chain corresponds to 288-301 (EIPMKILNWIAPNL).

Belongs to the mitochondrial carrier (TC 2.A.29) family. Post-translationally, the N-terminus is blocked.

The protein localises to the mitochondrion inner membrane. The catalysed reaction is O-acetyl-(R)-carnitine(in) + (R)-carnitine(out) = O-acetyl-(R)-carnitine(out) + (R)-carnitine(in). The enzyme catalyses an O-acyl-(R)-carnitine(in) + (R)-carnitine(out) = an O-acyl-(R)-carnitine(out) + (R)-carnitine(in). It carries out the reaction O-propanoyl-(R)-carnitine(in) + (R)-carnitine(out) = O-propanoyl-(R)-carnitine(out) + (R)-carnitine(in). It catalyses the reaction O-hexadecanoyl-(R)-carnitine(in) + (R)-carnitine(out) = O-hexadecanoyl-(R)-carnitine(out) + (R)-carnitine(in). The catalysed reaction is O-octanoyl-(R)-carnitine(in) + (R)-carnitine(out) = O-octanoyl-(R)-carnitine(out) + (R)-carnitine(in). The enzyme catalyses (R)-carnitine(in) = (R)-carnitine(out). Mediates the electroneutral exchange of acylcarnitines (O-acyl-(R)-carnitine or L-acylcarnitine) of different acyl chain lengths (ranging from O-acetyl-(R)-carnitine to long-chain O-acyl-(R)-carnitines) with free carnitine ((R)-carnitine or L-carnitine) across the mitochondrial inner membrane, via a ping-pong mechanism. Key player in the mitochondrial oxidation pathway, it translocates the fatty acids in the form of acylcarnitines into the mitochondrial matrix, where the carnitine palmitoyltransferase 2 (CPT-2) activates them to undergo fatty acid beta-oxidation. Catalyzes the unidirectional transport (uniport) of carnitine at lower rates than the antiport (exchange). The sequence is that of Mitochondrial carnitine/acylcarnitine carrier protein from Rattus norvegicus (Rat).